Here is a 917-residue protein sequence, read N- to C-terminus: Serine/arginine repetitive matrix protein 1 (917 aa).

Methionine 1 carries the N-acetylmethionine modification. Positions methionine 1–lysine 151 are necessary for DNA and RNA-binding. Residues methionine 1–lysine 156 form a necessary for mRNA 3'-end cleavage and cytoplasmic accumulation region. Residue arginine 7 is modified to Citrulline. The PWI domain occupies glutamine 27–leucine 126. A Glycyl lysine isopeptide (Lys-Gly) (interchain with G-Cter in SUMO2) cross-link involves residue lysine 127. A compositionally biased stretch (basic and acidic residues) spans glutamate 139–arginine 170. The interval glutamate 139–serine 917 is disordered. Residue lysine 140 is modified to N6-acetyllysine. A compositionally biased stretch (basic residues) spans serine 171–serine 207. Residues proline 214–serine 234 show a composition bias toward basic and acidic residues. A Phosphothreonine modification is found at threonine 220. A Phosphoserine modification is found at serine 227. Lysine 231 participates in a covalent cross-link: Glycyl lysine isopeptide (Lys-Gly) (interchain with G-Cter in SUMO1); alternate. A Glycyl lysine isopeptide (Lys-Gly) (interchain with G-Cter in SUMO2); alternate cross-link involves residue lysine 231. Phosphoserine is present on residues serine 234 and serine 240. The residue at position 241 (threonine 241) is a Phosphothreonine. Positions lysine 246–arginine 275 are enriched in basic and acidic residues. Lysine 249 is covalently cross-linked (Glycyl lysine isopeptide (Lys-Gly) (interchain with G-Cter in SUMO2)). A Phosphoserine modification is found at serine 260. Basic residues-rich tracts occupy residues proline 276 to proline 329 and proline 336 to serine 351. A necessary for speckles and matrix localization region spans residues arginine 300 to proline 702. Residues serine 352 to arginine 368 show a composition bias toward low complexity. Serine 389, serine 391, serine 393, and serine 402 each carry phosphoserine. Threonine 406 is subject to Phosphothreonine. Serine 414 carries the post-translational modification Phosphoserine. The residue at position 416 (threonine 416) is a Phosphothreonine. Serine 420, serine 429, serine 431, and serine 436 each carry phosphoserine. Residues valine 428–lysine 438 show a composition bias toward polar residues. Residue lysine 447 forms a Glycyl lysine isopeptide (Lys-Gly) (interchain with G-Cter in SUMO2) linkage. Residues serine 450 and serine 452 each carry the phosphoserine modification. Lysine 459 is covalently cross-linked (Glycyl lysine isopeptide (Lys-Gly) (interchain with G-Cter in SUMO2)). Residues serine 463 and serine 465 each carry the phosphoserine modification. Lysine 472 is covalently cross-linked (Glycyl lysine isopeptide (Lys-Gly) (interchain with G-Cter in SUMO2)). Serine 478 carries the phosphoserine modification. The span at serine 478–serine 501 shows a compositional bias: low complexity. The segment covering glutamate 503–glycine 518 has biased composition (basic and acidic residues). Phosphoserine is present on residues serine 524, serine 526, serine 528, serine 530, serine 532, serine 563, and serine 565. The span at serine 557–serine 574 shows a compositional bias: basic residues. Threonine 569 is subject to Phosphothreonine. Residues serine 574 and serine 576 each carry the phosphoserine modification. The segment covering proline 581 to serine 606 has biased composition (basic residues). Phosphothreonine occurs at positions 586, 588, and 595. Serine 597 carries the phosphoserine modification. Low complexity predominate over residues proline 607–serine 619. Tyrosine 610 bears the Phosphotyrosine mark. Serine 611, serine 619, and serine 621 each carry phosphoserine. Threonine 628 carries the phosphothreonine modification. Residues serine 630, serine 640, serine 642, serine 650, and serine 652 each carry the phosphoserine modification. The segment covering proline 635–serine 650 has biased composition (basic residues). A compositionally biased stretch (basic residues) spans threonine 663–glycine 677. Positions serine 699–valine 713 are enriched in pro residues. Residues serine 708, serine 709, serine 718, serine 720, serine 726, and serine 728 each carry the phosphoserine modification. Low complexity-rich tracts occupy residues arginine 714–arginine 732, alanine 749–proline 772, and serine 782–valine 799. Threonine 731 bears the Phosphothreonine mark. 10 positions are modified to phosphoserine: serine 751, serine 753, serine 761, serine 765, serine 767, serine 769, serine 782, serine 786, serine 788, and serine 790. Threonine 791 is modified (phosphothreonine). Phosphoserine occurs at positions 794 and 804. Threonine 806 carries the phosphothreonine modification. 3 positions are modified to phosphoserine: serine 808, serine 810, and serine 815. The segment covering lysine 822 to glutamate 847 has biased composition (basic residues). Residues valine 850–proline 879 show a composition bias toward low complexity. Lysine 882 is covalently cross-linked (Glycyl lysine isopeptide (Lys-Gly) (interchain with G-Cter in SUMO2)). Threonine 885 is modified (phosphothreonine). The residue at position 887 (serine 887) is a Phosphoserine. The span at aspartate 895–leucine 905 shows a compositional bias: basic and acidic residues. Serine 914 bears the Phosphoserine mark.

This sequence belongs to the splicing factor SR family. Identified in the spliceosome C complex. Found in a pre-mRNA splicing complex with SFRS4, SFRS5, SNRP70, SNRPA1, SRRM1 and SRRM2. Component of the minor spliceosome, which splices U12-type introns. Found in a pre-mRNA exonic splicing enhancer (ESE) complex with SNRP70, SNRPA1, SRRM1 and TRA2B/SFRS10. Found in a mRNA splicing-dependent exon junction complex (EJC) with DEK, PRPF8, NCBP1, RBM8A, RNPS1, SRRM1 and ALYREF/THOC4. Interacts with DDX39B, CPSF1, RBM8A, RNPS1, and ALYREF/THOC4. Seems to be a compound of RNA export complexes that are released from speckles in a ATP-dependent manner. Phosphorylated on multiple serine and threonine residues by DYRK3 during the G2-to-M transition, after the nuclear-envelope breakdown. Phosphorylation by DYRK3 promotes disassembly of nuclear speckles. In terms of processing, citrullinated by PADI4.

Part of pre- and post-splicing multiprotein mRNP complexes. As a component of the minor spliceosome, involved in the splicing of U12-type introns in pre-mRNAs. Involved in numerous pre-mRNA processing events. Promotes constitutive and exonic splicing enhancer (ESE)-dependent splicing activation by bridging together sequence-specific (SR family proteins, SFRS4, SFRS5 and TRA2B/SFRS10) and basal snRNP (SNRP70 and SNRPA1) factors of the spliceosome. Stimulates mRNA 3'-end cleavage independently of the formation of an exon junction complex. Binds both pre-mRNA and spliced mRNA 20-25 nt upstream of exon-exon junctions. Binds RNA and DNA with low sequence specificity and has similar preference for either double- or single-stranded nucleic acid substrates. The chain is Serine/arginine repetitive matrix protein 1 (SRRM1) from Pongo abelii (Sumatran orangutan).